The sequence spans 160 residues: Endoribonuclease YbeY (160 aa).

The Zn(2+) site is built by H121, H125, and H131.

This sequence belongs to the endoribonuclease YbeY family. Requires Zn(2+) as cofactor.

It is found in the cytoplasm. In terms of biological role, single strand-specific metallo-endoribonuclease involved in late-stage 70S ribosome quality control and in maturation of the 3' terminus of the 16S rRNA. The protein is Endoribonuclease YbeY of Hydrogenovibrio crunogenus (strain DSM 25203 / XCL-2) (Thiomicrospira crunogena).